The sequence spans 651 residues: Beta-glucuronidase (651 aa).

The N-terminal stretch at 1–22 (MARGSAVAWAALGPLLWGCALG) is a signal peptide. N-linked (GlcNAc...) asparagine glycans are attached at residues N173, N272, and N420. Catalysis depends on E451, which acts as the Proton donor. N631 carries N-linked (GlcNAc...) asparagine glycosylation.

This sequence belongs to the glycosyl hydrolase 2 family. In terms of assembly, homotetramer. In terms of processing, N-linked glycosylated with 3 to 4 oligosaccharide chains.

Its subcellular location is the lysosome. The catalysed reaction is a beta-D-glucuronoside + H2O = D-glucuronate + an alcohol. Its activity is regulated as follows. Inhibited by L-aspartic acid. Functionally, plays an important role in the degradation of dermatan and keratan sulfates. This Homo sapiens (Human) protein is Beta-glucuronidase (GUSB).